A 328-amino-acid chain; its full sequence is MSSTPNKQAGYPRLVADIGGTNARFALETAPRVIEKAAVLPCKDYDTVTDAVRAYLNQSGATAVRHAAFAIANPILGDWVQMTNHHWAFSIETTRQTLGLDTLILLNDFTAQALAVTQTSSKDLMQVGGQKPVEFAPKAVIGPGTGLGVSGLVHSHAGWVALAGEGGHTSFPPFDDMEVLIWQYAKNKYGHVSAERFLSGAGLSLVYEALAAKQKAKPAKLMPSEITEKALSGASPLCRQTLDIFCAMLGTVASNLALTLGARGGVYLCGGIIPRVLEYFKTSPFRSRFENKGRFEAYLAAIPVYVVLSEFPGISGAAAALDNHLRNV.

Position 16–21 (16–21) interacts with ATP; it reads ADIGGT.

The protein belongs to the bacterial glucokinase family.

Its subcellular location is the cytoplasm. The catalysed reaction is D-glucose + ATP = D-glucose 6-phosphate + ADP + H(+). This chain is Glucokinase, found in Neisseria meningitidis serogroup C (strain 053442).